The sequence spans 629 residues: 1-deoxy-D-xylulose-5-phosphate synthase (629 aa).

Residues histidine 72 and 113–115 (GHS) contribute to the thiamine diphosphate site. Aspartate 144 serves as a coordination point for Mg(2+). Thiamine diphosphate contacts are provided by residues 145-146 (GA), asparagine 173, tyrosine 284, and glutamate 366. Asparagine 173 provides a ligand contact to Mg(2+).

Belongs to the transketolase family. DXPS subfamily. As to quaternary structure, homodimer. The cofactor is Mg(2+). It depends on thiamine diphosphate as a cofactor.

The catalysed reaction is D-glyceraldehyde 3-phosphate + pyruvate + H(+) = 1-deoxy-D-xylulose 5-phosphate + CO2. It functions in the pathway metabolic intermediate biosynthesis; 1-deoxy-D-xylulose 5-phosphate biosynthesis; 1-deoxy-D-xylulose 5-phosphate from D-glyceraldehyde 3-phosphate and pyruvate: step 1/1. In terms of biological role, catalyzes the acyloin condensation reaction between C atoms 2 and 3 of pyruvate and glyceraldehyde 3-phosphate to yield 1-deoxy-D-xylulose-5-phosphate (DXP). This Halalkalibacterium halodurans (strain ATCC BAA-125 / DSM 18197 / FERM 7344 / JCM 9153 / C-125) (Bacillus halodurans) protein is 1-deoxy-D-xylulose-5-phosphate synthase.